A 405-amino-acid chain; its full sequence is L-carnitine CoA-transferase (405 aa).

The CoA site is built by Lys-97 and Arg-104. The active-site Nucleophile is Asp-169.

It belongs to the CoA-transferase III family. CaiB subfamily. As to quaternary structure, homodimer.

Its subcellular location is the cytoplasm. It carries out the reaction crotonobetainyl-CoA + (R)-carnitine = crotonobetaine + (R)-carnitinyl-CoA. It catalyses the reaction 4-(trimethylamino)butanoyl-CoA + (R)-carnitine = (R)-carnitinyl-CoA + 4-(trimethylamino)butanoate. Its pathway is amine and polyamine metabolism; carnitine metabolism. Functionally, catalyzes the reversible transfer of the CoA moiety from gamma-butyrobetainyl-CoA to L-carnitine to generate L-carnitinyl-CoA and gamma-butyrobetaine. Is also able to catalyze the reversible transfer of the CoA moiety from gamma-butyrobetainyl-CoA or L-carnitinyl-CoA to crotonobetaine to generate crotonobetainyl-CoA. In Escherichia coli O139:H28 (strain E24377A / ETEC), this protein is L-carnitine CoA-transferase.